We begin with the raw amino-acid sequence, 1018 residues long: Thrombospondin type-1 domain-containing protein 4 (1018 aa).

Positions 1–25 (MVSHFMGSLSVLCFLLLLGFQFVCP) are cleaved as a signal peptide. Positions 53–307 (PGVWGAWGPW…YKLCNTNVCP (255 aa)) constitute a TSP type-1 1 domain. Disordered regions lie at residues 111-235 (SVPL…RSGL), 254-279 (PAASSLFHSPETSNNHGVGTHGATQS), and 534-623 (SPQV…NWKQ). Basic residues predominate over residues 187–200 (QRLRRQKLSSRHSR). Positions 201 to 210 (SQGASSARHG) are enriched in low complexity. Residues 259–279 (LFHSPETSNNHGVGTHGATQS) show a composition bias toward polar residues. Basic and acidic residues-rich tracts occupy residues 556–577 (RSQEEGEQKGRNEEKEDLRGEA) and 592–603 (RHPDRFSPHRPD). TSP type-1 domains follow at residues 676-737 (CPAF…KICS), 739-792 (WQIR…DMGP), 793-851 (CAKS…GPCT), 852-911 (GKVE…HLKP), and 912-968 (CGAK…QDCV). A PLAC domain is found at 971-1008 (VDENCKDKYYNCNVVVQARLCVYNYYKTACCASCTRVA).

Interacts with FBN1. May interact with TGFB1.

The protein localises to the secreted. Its subcellular location is the extracellular space. The protein resides in the extracellular matrix. Promotes FBN1 matrix assembly. Attenuates TGFB signaling, possibly by accelerating the sequestration of large latent complexes of TGFB or active TGFB by FBN1 microfibril assembly, thereby negatively regulating the expression of TGFB regulatory targets, such as POSTN. The sequence is that of Thrombospondin type-1 domain-containing protein 4 (THSD4) from Homo sapiens (Human).